A 466-amino-acid polypeptide reads, in one-letter code: Vimentin (466 aa).

Residues 1-13 are compositionally biased toward low complexity; the sequence is MSTRSVSSSSYRR. The segment at 1–32 is disordered; the sequence is MSTRSVSSSSYRRMFGGPGTGSRPSSTRSYVT. An N-acetylserine modification is found at serine 2. The head stretch occupies residues 2-95; sequence STRSVSSSSY…FSLADAINTE (94 aa). 5 positions are modified to phosphoserine: serine 5, serine 7, serine 8, serine 9, and serine 10. Serine 7 carries O-linked (GlcNAc) serine; alternate glycosylation. The residue at position 20 (threonine 20) is a Phosphothreonine. The span at 21–32 shows a compositional bias: low complexity; the sequence is GSRPSSTRSYVT. Residues serine 25 and serine 26 each carry the phosphoserine modification. A glycan (O-linked (GlcNAc) threonine) is linked at threonine 33. Serine 34, serine 39, serine 42, serine 47, serine 49, and serine 51 each carry phosphoserine. A glycan (O-linked (GlcNAc) serine; alternate) is linked at serine 34. The residue at position 53 (tyrosine 53) is a Phosphotyrosine. A phosphoserine mark is found at serine 55 and serine 56. Tyrosine 61 bears the Phosphotyrosine mark. Phosphoserine occurs at positions 66, 72, 73, 83, and 87. Residues 96–131 form a coil 1A region; sequence FKNTRTNEKVELQELNDRFANYIDKVRFLEQQNKIL. Residues 96–131 are a coiled coil; sequence FKNTRTNEKVELQELNDRFANYIDKVRFLEQQNKIL. Residues 103–411 enclose the IF rod domain; sequence EKVELQELND…KLLEGEESRI (309 aa). Lysine 104 is covalently cross-linked (Glycyl lysine isopeptide (Lys-Gly) (interchain with G-Cter in SUMO2)). Phosphotyrosine is present on tyrosine 117. Residues lysine 120, lysine 129, and lysine 139 each carry the N6-acetyllysine; alternate modification. An N6-succinyllysine; alternate mark is found at lysine 120 and lysine 129. Residues lysine 120, lysine 129, and lysine 139 each participate in a glycyl lysine isopeptide (Lys-Gly) (interchain with G-Cter in SUMO2); alternate cross-link. Residues 132-153 are linker 1; that stretch reads LAELEQLKGQGKSRLGDLYEEE. At serine 144 the chain carries Phosphoserine. A coiled-coil region spans residues 154–245; it reads MRELRRQVDQ…KLHDEEIQEL (92 aa). The interval 154 to 245 is coil 1B; that stretch reads MRELRRQVDQ…KLHDEEIQEL (92 aa). Position 168 is an N6-acetyllysine (lysine 168). Lysine 188 bears the N6-acetyllysine; alternate mark. Residue lysine 188 is modified to N6-succinyllysine; alternate. Serine 214 carries the phosphoserine modification. The residue at position 223 (lysine 223) is an N6-acetyllysine; alternate. Residue lysine 223 forms a Glycyl lysine isopeptide (Lys-Gly) (interchain with G-Cter in SUMO2); alternate linkage. Serine 226 bears the Phosphoserine mark. At lysine 235 the chain carries N6-acetyllysine. A linker 12 region spans residues 246-268; the sequence is QAQIQDQHVQIDMDVSKPDLTAA. Lysine 262 is covalently cross-linked (Glycyl lysine isopeptide (Lys-Gly) (interchain with G-Cter in SUMO2)). Residues 269–407 are coil 2; sequence LRDVRQQYES…ATYRKLLEGE (139 aa). At lysine 294 the chain carries N6-acetyllysine; alternate. Position 294 is an N6-succinyllysine; alternate (lysine 294). Lysine 294 is covalently cross-linked (Glycyl lysine isopeptide (Lys-Gly) (interchain with G-Cter in SUMO2); alternate). The residue at position 299 (serine 299) is a Phosphoserine. Residues 303-407 adopt a coiled-coil conformation; it reads NRNNDALRQA…ATYRKLLEGE (105 aa). Lysine 313 participates in a covalent cross-link: Glycyl lysine isopeptide (Lys-Gly) (interchain with G-Cter in SUMO2). Serine 325 carries the post-translational modification Phosphoserine. Positions 326 to 329 match the [IL]-x-C-x-x-[DE] motif motif; that stretch reads LTCE. An N6-acetyllysine; alternate modification is found at lysine 373. Lysine 373 participates in a covalent cross-link: Glycyl lysine isopeptide (Lys-Gly) (interchain with G-Cter in SUMO2); alternate. The segment at 408 to 466 is tail; the sequence is ESRIALPLPNFSSLNLRETNLDSLPLVDTHSKRTLLIKTVETRDGQVINETSQHHDDLE. 3 positions are modified to phosphoserine: serine 409, serine 419, and serine 420. Threonine 426 carries the phosphothreonine modification. Serine 430 carries the phosphoserine modification. Position 436 is a phosphothreonine (threonine 436). At serine 438 the chain carries Phosphoserine. Lysine 439 participates in a covalent cross-link: Glycyl lysine isopeptide (Lys-Gly) (interchain with G-Cter in SUMO2). An N6-acetyllysine; alternate modification is found at lysine 445. Lysine 445 is modified (N6-succinyllysine; alternate). A Glycyl lysine isopeptide (Lys-Gly) (interchain with G-Cter in SUMO2); alternate cross-link involves residue lysine 445. Lysine 445 is covalently cross-linked (Glycyl lysine isopeptide (Lys-Gly) (interchain with G-Cter in SUMO1); alternate). Threonine 446 and threonine 458 each carry phosphothreonine. A Phosphoserine modification is found at serine 459.

It belongs to the intermediate filament family. As to quaternary structure, homomer assembled from elementary dimers. Identified in complexes that contain VIM, EZR, AHNAK, BFSP1, BFSP2, ANK2, PLEC, PRX and spectrin. Interacts with BCAS3. Interacts with LGSN. Interacts with SYNM. Interacts (via rod region) with PLEC (via CH 1 domain). Interacts with STK33. Interacts with LARP6. Interacts with RAB8B. Interacts with TOR1A; the interaction associates TOR1A with the cytoskeleton. Interacts with TOR1AIP1. Interacts with TOR1AIP1. Interacts with DIAPH1. Interacts with EPPK1; interaction is dependent of higher-order structure of intermediate filament. Interacts with the non-receptor tyrosine kinase SRMS; the interaction leads to phosphorylation of VIM. Interacts with NOD2. Interacts (via head region) with CORO1C. Interacts with HDGF. Interacts with PRKCE (via phorbol-ester/DAG-type 2 domain). Interacts with BFSP2. Interacts with PPL. Interacts with PKP1 and PKP2. Interacts with SCRIB (via PDZ domains); the interaction protects SCRIB from proteasomal degradation and facilitates SCRIB localization to intermediate filaments, the interaction is reduced by cell contact inhibition. Filament disassembly during mitosis is promoted by phosphorylation at Ser-55 as well as by nestin. One of the most prominent phosphoproteins in various cells of mesenchymal origin. Phosphorylation is enhanced during cell division, at which time vimentin filaments are significantly reorganized. Phosphorylation by PKN1 inhibits the formation of filaments. Phosphorylated at Ser-56 by CDK5 during neutrophil secretion in the cytoplasm. Phosphorylated by STK33. Phosphorylated on tyrosine residues by SRMS. Post-translationally, O-glycosylated during cytokinesis at sites identical or close to phosphorylation sites, this interferes with the phosphorylation status. In terms of processing, S-nitrosylation is induced by interferon-gamma and oxidatively-modified low-densitity lipoprotein (LDL(ox)) possibly implicating the iNOS-S100A8/9 transnitrosylase complex.

The protein localises to the cytoplasm. The protein resides in the cytoskeleton. It is found in the nucleus matrix. It localises to the cell membrane. In terms of biological role, vimentins are class-III intermediate filaments found in various non-epithelial cells, especially mesenchymal cells. Vimentin is attached to the nucleus, endoplasmic reticulum, and mitochondria, either laterally or terminally. Plays a role in cell directional movement, orientation, cell sheet organization and Golgi complex polarization at the cell migration front. Protects SCRIB from proteasomal degradation and facilitates its localization to intermediate filaments in a cell contact-mediated manner. Functionally, involved with LARP6 in the stabilization of type I collagen mRNAs for CO1A1 and CO1A2. The sequence is that of Vimentin (VIM) from Canis lupus familiaris (Dog).